The following is an 865-amino-acid chain: Cadherin-related family member 1 (865 aa).

The signal sequence occupies residues 1-23 (MKHVRHFIPSLFLSLVHVCLVQA). The Extracellular portion of the chain corresponds to 24–705 (NYAPYFFDNG…TKDNPMKALG (682 aa)). Cadherin domains lie at 38 to 137 (NGNM…SPEF), 138 to 249 (INTP…PPMF), 250 to 356 (IGTP…PPTF), 362 to 475 (PQNR…VPKF), 476 to 579 (SSDY…SPEF), and 571 to 690 (DVND…GPMA). The helical transmembrane segment at 706–726 (VLAGVMGIMVLITIMISTAMF) threads the bilayer. The Cytoplasmic portion of the chain corresponds to 727–865 (WRNKRSNKIM…RNASMGEPHI (139 aa)). The disordered stretch occupies residues 782–810 (ENSNNNVQAAPVPPAAPLPPPPPALAASG). Positions 792 to 805 (PVPPAAPLPPPPPA) are enriched in pro residues.

The protein localises to the membrane. Potential calcium-dependent cell-adhesion protein. This chain is Cadherin-related family member 1 (CDHR1), found in Gallus gallus (Chicken).